A 487-amino-acid chain; its full sequence is Glycogen synthase 2 (487 aa).

Lysine 12 contacts ADP-alpha-D-glucose.

This sequence belongs to the glycosyltransferase 1 family. Bacterial/plant glycogen synthase subfamily.

The catalysed reaction is [(1-&gt;4)-alpha-D-glucosyl](n) + ADP-alpha-D-glucose = [(1-&gt;4)-alpha-D-glucosyl](n+1) + ADP + H(+). It participates in glycan biosynthesis; glycogen biosynthesis. Synthesizes alpha-1,4-glucan chains using ADP-glucose. The chain is Glycogen synthase 2 from Methylococcus capsulatus (strain ATCC 33009 / NCIMB 11132 / Bath).